Here is a 186-residue protein sequence, read N- to C-terminus: Elongation factor P (186 aa).

The protein belongs to the elongation factor P family.

The protein resides in the cytoplasm. It functions in the pathway protein biosynthesis; polypeptide chain elongation. Involved in peptide bond synthesis. Stimulates efficient translation and peptide-bond synthesis on native or reconstituted 70S ribosomes in vitro. Probably functions indirectly by altering the affinity of the ribosome for aminoacyl-tRNA, thus increasing their reactivity as acceptors for peptidyl transferase. This chain is Elongation factor P, found in Prochlorococcus marinus (strain MIT 9303).